Reading from the N-terminus, the 505-residue chain is AMP phosphorylase (505 aa).

AMP contacts are provided by residues glycine 170, 196–201 (SRAITS), and threonine 205. Aspartate 258 serves as the catalytic Proton donor. AMP contacts are provided by serine 266 and lysine 290.

This sequence belongs to the thymidine/pyrimidine-nucleoside phosphorylase family. Type 2 subfamily.

The enzyme catalyses AMP + phosphate = alpha-D-ribose 1,5-bisphosphate + adenine. The catalysed reaction is CMP + phosphate = cytosine + alpha-D-ribose 1,5-bisphosphate. It carries out the reaction UMP + phosphate = alpha-D-ribose 1,5-bisphosphate + uracil. Its function is as follows. Catalyzes the conversion of AMP and phosphate to adenine and ribose 1,5-bisphosphate (R15P). Exhibits phosphorylase activity toward CMP and UMP in addition to AMP. Functions in an archaeal AMP degradation pathway, together with R15P isomerase and RubisCO. The polypeptide is AMP phosphorylase (Methanococcus vannielii (strain ATCC 35089 / DSM 1224 / JCM 13029 / OCM 148 / SB)).